Here is a 103-residue protein sequence, read N- to C-terminus: Putative inactive recombination-promoting nuclease-like protein YjiP (103 aa).

Belongs to the Rpn/YhgA-like nuclease family.

This pseudogene is the N-terminal fragment of low activity DNA endonuclease RpnD which probably yields 3'-hydroxyl ends. The intact protein can be seen in this entry (AC B7NGZ6). Expression of the repaired protein increases the frequency of recA-independent recombination, but also decreases viability probably via DNA damage; in a RecA strain expression has no effect on viability but does induce the SOS repair response. May play a role in horizontal gene transfer. The protein is Putative inactive recombination-promoting nuclease-like protein YjiP (yjiP) of Escherichia coli (strain K12).